We begin with the raw amino-acid sequence, 148 residues long: Large ribosomal subunit protein bL9 (148 aa).

This sequence belongs to the bacterial ribosomal protein bL9 family.

Binds to the 23S rRNA. The polypeptide is Large ribosomal subunit protein bL9 (Heliobacterium modesticaldum (strain ATCC 51547 / Ice1)).